Reading from the N-terminus, the 144-residue chain is Putative pre-16S rRNA nuclease (144 aa).

Belongs to the YqgF nuclease family.

The protein resides in the cytoplasm. In terms of biological role, could be a nuclease involved in processing of the 5'-end of pre-16S rRNA. The protein is Putative pre-16S rRNA nuclease of Ralstonia nicotianae (strain ATCC BAA-1114 / GMI1000) (Ralstonia solanacearum).